Here is a 151-residue protein sequence, read N- to C-terminus: MKIWVDADACPVVIKEILFRAAERTQTETILVANHAMRIPPSKYISRLQVSSGFDVADDEIVKRIAKGDLVITGDIPLASEVIDNGGQALNPRGELYTTENIRSILNVRDFMDTMRSSGVEMSGGPPPLSQTDRQNFANNLDRILAQNKAG.

It belongs to the UPF0178 family.

In Pseudoalteromonas translucida (strain TAC 125), this protein is UPF0178 protein PSHAb0045.